Consider the following 367-residue polypeptide: Coiled-coil domain-containing protein 34 (367 aa).

Residue Ser-55 is modified to Phosphoserine. Disordered stretches follow at residues 77–105 (FPFG…KVES), 191–228 (QKKN…KAKE), and 310–349 (YNPI…SSLA). The segment covering 82–97 (DDSEGEDEEALDEDAR) has biased composition (acidic residues). 2 coiled-coil regions span residues 87 to 108 (EDEE…SLEG) and 153 to 280 (RLQQ…AKNK). Basic and acidic residues predominate over residues 197–228 (ERKEREQKINKEMEEKEAKKREKEHLQEKAKE). Over residues 339–349 (ASQPLPSSSLA) the composition is skewed to low complexity.

As to expression, expressed in testis and sperm.

It localises to the cell projection. The protein localises to the cilium. It is found in the flagellum. In terms of biological role, involved in spermatogenesis. Has a probable role in anterograde intraflagellar transport which is essential for the formation of sperm flagella. The polypeptide is Coiled-coil domain-containing protein 34 (Ccdc34) (Mus musculus (Mouse)).